A 173-amino-acid polypeptide reads, in one-letter code: 2-C-methyl-D-erythritol 2,4-cyclodiphosphate synthase (173 aa).

Positions 17 and 19 each coordinate a divalent metal cation. 4-CDP-2-C-methyl-D-erythritol 2-phosphate-binding positions include 17–19 and 49–50; these read DVH and HS. Histidine 57 provides a ligand contact to a divalent metal cation. 4-CDP-2-C-methyl-D-erythritol 2-phosphate-binding positions include 76–80, 147–150, and arginine 157; these read FPNTD and TTTE.

This sequence belongs to the IspF family. Homotrimer. It depends on a divalent metal cation as a cofactor.

The enzyme catalyses 4-CDP-2-C-methyl-D-erythritol 2-phosphate = 2-C-methyl-D-erythritol 2,4-cyclic diphosphate + CMP. Its pathway is isoprenoid biosynthesis; isopentenyl diphosphate biosynthesis via DXP pathway; isopentenyl diphosphate from 1-deoxy-D-xylulose 5-phosphate: step 4/6. Its function is as follows. Involved in the biosynthesis of isopentenyl diphosphate (IPP) and dimethylallyl diphosphate (DMAPP), two major building blocks of isoprenoid compounds. Catalyzes the conversion of 4-diphosphocytidyl-2-C-methyl-D-erythritol 2-phosphate (CDP-ME2P) to 2-C-methyl-D-erythritol 2,4-cyclodiphosphate (ME-CPP) with a corresponding release of cytidine 5-monophosphate (CMP). This Ehrlichia ruminantium (strain Welgevonden) protein is 2-C-methyl-D-erythritol 2,4-cyclodiphosphate synthase.